Consider the following 395-residue polypeptide: NAD(P)H-quinone oxidoreductase subunit H (395 aa).

It belongs to the complex I 49 kDa subunit family. In terms of assembly, NDH-1 can be composed of about 15 different subunits; different subcomplexes with different compositions have been identified which probably have different functions.

The protein localises to the cellular thylakoid membrane. It carries out the reaction a plastoquinone + NADH + (n+1) H(+)(in) = a plastoquinol + NAD(+) + n H(+)(out). It catalyses the reaction a plastoquinone + NADPH + (n+1) H(+)(in) = a plastoquinol + NADP(+) + n H(+)(out). Functionally, NDH-1 shuttles electrons from an unknown electron donor, via FMN and iron-sulfur (Fe-S) centers, to quinones in the respiratory and/or the photosynthetic chain. The immediate electron acceptor for the enzyme in this species is believed to be plastoquinone. Couples the redox reaction to proton translocation, and thus conserves the redox energy in a proton gradient. Cyanobacterial NDH-1 also plays a role in inorganic carbon-concentration. The polypeptide is NAD(P)H-quinone oxidoreductase subunit H (Prochlorococcus marinus (strain MIT 9301)).